The primary structure comprises 990 residues: Tyrosine-protein phosphatase 3 (990 aa).

Disordered stretches follow at residues 47–88 (QSQS…SPSV), 100–193 (NKIN…SNIE), 246–414 (PNQQ…SFSQ), and 431–452 (KPEM…HNDL). 2 stretches are compositionally biased toward low complexity: residues 52-88 (NTNT…SPSV) and 100-117 (NKIN…NNNN). Residues 127-136 (LKLSNTMIIK) show a composition bias toward polar residues. 5 stretches are compositionally biased toward low complexity: residues 137–191 (NNNN…SNSN), 250–271 (SSSS…SSLL), 278–293 (NNST…NSSN), 310–327 (QAQV…QHQQ), and 334–413 (NLSS…TSFS). One can recognise a Tyrosine-protein phosphatase domain in the interval 422-715 (MRLEFEMIKK…IFIFKVINDV (294 aa)). Residues 437–447 (KKSHKHHQRHY) are compositionally biased toward basic residues. Residue Cys650 is the Phosphocysteine intermediate of the active site. Residues 786–795 (PPQQQQDNPF) show a composition bias toward polar residues. Disordered regions lie at residues 786-814 (PPQQ…NISI) and 834-990 (LQQQ…IKCF). Composition is skewed to low complexity over residues 796-806 (SKSSIKISPSP) and 834-850 (LQQQ…DNPP). The span at 851 to 868 (LNMSSNSIKFPPVTSLSS) shows a compositional bias: polar residues. Low complexity-rich tracts occupy residues 878–916 (NDNN…DNNG) and 924–968 (GSFL…SDNN).

Belongs to the protein-tyrosine phosphatase family. Non-receptor class subfamily. As to expression, in the anterior-like and prestalk cell types.

It is found in the cytoplasm. The catalysed reaction is O-phospho-L-tyrosyl-[protein] + H2O = L-tyrosyl-[protein] + phosphate. Its function is as follows. Seems to dephosphorylate a protein of 130 kDa (p130). The sequence is that of Tyrosine-protein phosphatase 3 (ptpC) from Dictyostelium discoideum (Social amoeba).